We begin with the raw amino-acid sequence, 630 residues long: Golgin subfamily A member 8K (630 aa).

Positions 1–76 (MAEETQHNKL…TSSATLKDLE (76 aa)) are disordered. Coiled coils occupy residues 86-148 (LDSR…LNTD) and 224-411 (LTQL…QQNQ). The segment covering 352–362 (KQEERIQEQHK) has biased composition (basic and acidic residues). 2 disordered regions span residues 352-379 (KQEERIQEQHKSLQQLAKPQSVFEEPNN) and 424-444 (GEGHGEHLDSEGEEAPQPMPS).

This sequence belongs to the GOLGA8 family.

This Homo sapiens (Human) protein is Golgin subfamily A member 8K.